We begin with the raw amino-acid sequence, 78 residues long: Acyl carrier protein (78 aa).

One can recognise a Carrier domain in the interval 2-77 (SNLEERVKKI…AAIDYVTANA (76 aa)). O-(pantetheine 4'-phosphoryl)serine is present on serine 37.

The protein belongs to the acyl carrier protein (ACP) family. 4'-phosphopantetheine is transferred from CoA to a specific serine of apo-ACP by AcpS. This modification is essential for activity because fatty acids are bound in thioester linkage to the sulfhydryl of the prosthetic group.

It localises to the cytoplasm. The protein operates within lipid metabolism; fatty acid biosynthesis. In terms of biological role, carrier of the growing fatty acid chain in fatty acid biosynthesis. This is Acyl carrier protein from Vibrio vulnificus (strain CMCP6).